The primary structure comprises 128 residues: Small ribosomal subunit protein eS8 (128 aa).

The interval 1-37 (MGYFQGNDFRKITGGKKGKHRDKRKFELGSPPTETKL) is disordered. Over residues 13–23 (TGGKKGKHRDK) the composition is skewed to basic residues.

This sequence belongs to the eukaryotic ribosomal protein eS8 family. Part of the 30S ribosomal subunit.

The polypeptide is Small ribosomal subunit protein eS8 (Sulfurisphaera tokodaii (strain DSM 16993 / JCM 10545 / NBRC 100140 / 7) (Sulfolobus tokodaii)).